A 686-amino-acid polypeptide reads, in one-letter code: MGASQSTSGIEGASSPEQLSVLLAERFATKCFTPLELTHFKDNFYSRALDQAGFRYWNEKILSDFLSVPDGIYTNEKDGGHDGRLDAGPVVFRMVSYLGAFPFQKTLAPSVLTFDSMVKVVVLLTERYGKVLRRGRKDRVKLLFGSLADVGRSLEQDTKKQNDSAESASKSEDSKQSSHVHGFSVDEPTNDDYEEHEDDDDLALAALESLDAIEVFKHDQQIDRAVCEARISIDTFRRLLMLLLAIAPLRPLESVNKYTFNLSSEEQAAVKREADTIIASFTEEEIRDGIGYKTFAKTVTLSLPHLFDPLTPLFEHLLFSENLDLSRKQTGQSEPSPESPPSEAPTDANIDEKPTTIMLPGSFESAILTPSMVSHLSFFLPASSGQNLYRSDIRLHPVFSTVAHGESLTSFQHNVFTWQAPSLLIVQGALPGSSGSPDELITLGAYIPQPWKPSSSSSYESPQNLNNRSRLPYLFQLHPKHSVLPGNSSLLQTKEQPSTTPIVYFSTTTGIAIGCEVPASAQQHRTSYGPGVPSPHQQPHRRQSSTNHKQQQGPLPHGAGSLIIDAALETAQLHISYLAAHTGVFTPAVPPTLPTITHIDIYNLEIWGIIEPPSLSLLPDSAGIAKDAISRQREAWQFDAREAERRKGINVKLGSGNDSNYQNAKALLEMAGIIGDQAQQRSGGSV.

The segment covering 155–176 has biased composition (basic and acidic residues); that stretch reads EQDTKKQNDSAESASKSEDSKQ. 3 disordered regions span residues 155–198, 326–355, and 522–559; these read EQDT…EHED, SRKQ…EKPT, and QQHR…PHGA. The span at 188–198 shows a compositional bias: acidic residues; it reads PTNDDYEEHED. Positions 366–610 constitute a TLDc domain; the sequence is AILTPSMVSH…IYNLEIWGII (245 aa). Residues 544–553 are compositionally biased toward polar residues; sequence SSTNHKQQQG.

The protein belongs to the RTC5 family.

The protein localises to the cytoplasm. In terms of biological role, may be involved in a process influencing telomere capping. In Talaromyces stipitatus (strain ATCC 10500 / CBS 375.48 / QM 6759 / NRRL 1006) (Penicillium stipitatum), this protein is Restriction of telomere capping protein 5 (rtc5).